The primary structure comprises 309 residues: Ribonuclease H2 subunit B (309 aa).

Position 2 is an N-acetylalanine (Ala-2). Lys-295 carries the N6-acetyllysine modification. Ser-296 bears the Phosphoserine mark.

This sequence belongs to the RNase H2 subunit B family. In terms of assembly, the RNase H2 complex is a heterotrimer composed of the catalytic subunit RNASEH2A and the non-catalytic subunits RNASEH2B and RNASEH2C.

It is found in the nucleus. Functionally, non catalytic subunit of RNase H2, an endonuclease that specifically degrades the RNA of RNA:DNA hybrids. Participates in DNA replication, possibly by mediating the removal of lagging-strand Okazaki fragment RNA primers during DNA replication. Mediates the excision of single ribonucleotides from DNA:RNA duplexes. The sequence is that of Ribonuclease H2 subunit B (RNASEH2B) from Bos taurus (Bovine).